The following is a 556-amino-acid chain: Urocanate hydratase (556 aa).

Residues 52-53 (GG), Gln-130, 176-178 (GMG), Glu-196, Arg-201, 242-243 (NA), 263-267 (QTSAH), 273-274 (YL), and Tyr-322 each bind NAD(+). The active site involves Cys-410. Gly-492 is an NAD(+) binding site.

It belongs to the urocanase family. NAD(+) is required as a cofactor.

It is found in the cytoplasm. It carries out the reaction 4-imidazolone-5-propanoate = trans-urocanate + H2O. It participates in amino-acid degradation; L-histidine degradation into L-glutamate; N-formimidoyl-L-glutamate from L-histidine: step 2/3. Catalyzes the conversion of urocanate to 4-imidazolone-5-propionate. This chain is Urocanate hydratase, found in Shewanella woodyi (strain ATCC 51908 / MS32).